Reading from the N-terminus, the 618-residue chain is DELLA protein SLN1 (618 aa).

Residues 1 to 36 (MKREYQDGGGSGGGGDEMGSSRDKMMVSSSEAGEGE) form a disordered region. The segment covering 7-17 (DGGGSGGGGDE) has biased composition (gly residues). The short motif at 39-43 (DELLA) is the DELLA motif element. Disordered stretches follow at residues 106-137 (LNAP…YFDL) and 159-197 (APAD…GAAR). The segment covering 108–118 (APPPPLPPAPP) has biased composition (pro residues). Low complexity-rich tracts occupy residues 119-128 (QLNASTSSTV) and 176-197 (TGGS…GAAR). One can recognise a GRAS domain in the interval 221 to 614 (VDTQEAGIRL…RPLIATSAWR (394 aa)). The tract at residues 228 to 284 (IRLVHALLACAEAVQQENLSAAEALVKQIPLLAASQGGAMRKVAAYFGEALARRVFR) is leucine repeat I (LRI). The short motif at 235–239 (LACAE) is the LxCxE motif element. The segment at 303-368 (HAHFYESCPY…GGPPSFRLTG (66 aa)) is VHIID. The VHIID motif lies at 334 to 338 (VHVVD). Residues 382–421 (QVGWKLAQFAHTIRVDFQYRGLVAATLADLEPFMLQPEGE) form a leucine repeat II (LRII) region. Residues 431–535 (IAVNSVFEMH…EVYLGRQICN (105 aa)) are PFYRE. Positions 538–614 (ACEGTERTER…RPLIATSAWR (77 aa)) are SAW.

It belongs to the GRAS family. DELLA subfamily. Post-translationally, phosphorylated. Ubiquitinated. Upon GA application it is ubiquitinated, leading to its subsequent degradation. In terms of tissue distribution, apparently restricted to regions where growth is occurring in the leaf blade. Localizes almost exclusively to the basal elongation zone (EZ) for the elongating blades of L1, L2 and L3. More detailed fractionation of the L3 blade shows that in cv. Himalaya, it is preferentially localized to the basal third of the EZ, but its presence can still be detected toward the end of the EZ (at protein level).

It localises to the nucleus. In terms of biological role, probable transcriptional regulator that acts as a repressor of the gibberellin (GA) signaling pathway. Probably acts by participating in large multiprotein complexes that repress transcription of GA-inducible genes. Upon GA application, it is degraded by the proteasome, allowing the GA signaling pathway. Acts as a negative regulator of GAMYB gene expression. This is DELLA protein SLN1 (SLN1) from Hordeum vulgare (Barley).